Reading from the N-terminus, the 54-residue chain is Large ribosomal subunit protein bL33 (54 aa).

Belongs to the bacterial ribosomal protein bL33 family.

This Corynebacterium glutamicum (strain R) protein is Large ribosomal subunit protein bL33.